Consider the following 432-residue polypeptide: Adenylosuccinate synthetase (432 aa).

Residues 13–19 (GDEGKGK) and 41–43 (GHT) each bind GTP. The active-site Proton acceptor is D14. Positions 14 and 41 each coordinate Mg(2+). IMP-binding positions include 14-17 (DEGK), 39-42 (NAGH), T130, R144, Q225, T240, and R306. The Proton donor role is filled by H42. A substrate-binding site is contributed by 302 to 308 (TVTGRAR). GTP contacts are provided by residues R308, 334–336 (KLD), and 416–418 (STG).

This sequence belongs to the adenylosuccinate synthetase family. As to quaternary structure, homodimer. Requires Mg(2+) as cofactor.

The protein localises to the cytoplasm. It carries out the reaction IMP + L-aspartate + GTP = N(6)-(1,2-dicarboxyethyl)-AMP + GDP + phosphate + 2 H(+). It participates in purine metabolism; AMP biosynthesis via de novo pathway; AMP from IMP: step 1/2. In terms of biological role, plays an important role in the de novo pathway of purine nucleotide biosynthesis. Catalyzes the first committed step in the biosynthesis of AMP from IMP. The chain is Adenylosuccinate synthetase from Herminiimonas arsenicoxydans.